The following is a 382-amino-acid chain: Tuliposide A-converting enzyme 2, chloroplastic (382 aa).

The N-terminal 74 residues, 1 to 74 (MSVASFFSSL…PSPSLSPTPT (74 aa)), are a transit peptide targeting the chloroplast. The active-site Acyl-ester intermediate is the serine 232. Active-site charge relay system residues include aspartate 324 and histidine 356.

The protein belongs to the AB hydrolase superfamily. In terms of assembly, homodimer. Expressed in roots, stems, leaves, petals, stamens and pistils, but not in bulb scales.

Its subcellular location is the plastid. The protein localises to the chloroplast. It catalyses the reaction 6-tuliposide A = tulipalin A + D-glucose. Inhibited by NaF, AgNO(3), HgCl(2), CuSO(4) and phenylmethylsulfonyl fluoride (PMSF). Lactone-forming carboxylesterases, specifically catalyzing intramolecular transesterification, but not hydrolysis. Involved in the biosynthesis of tulipalins, defensive chemicals that show antimicrobial activities against a broad range of strains of bacteria and fungi. Substrates are 6-tuliposide A &gt; 6-tuliposide B. This chain is Tuliposide A-converting enzyme 2, chloroplastic (TCEA2), found in Tulipa gesneriana (Garden tulip).